Reading from the N-terminus, the 418-residue chain is Putative ion-transport protein YfeO (418 aa).

12 helical membrane-spanning segments follow: residues 10-30 (LLLSLPAVAIGITSSLILIMV), 54-74 (DSPLWIIGVLTLTGIAVGLVI), 99-119 (ALPGLIVALILGLAGGVSLGP), 120-140 (EHPIITVNIALAVAIGARLLP), 149-169 (ILASAGTIGALFGTTVAAALI), 186-206 (LFAPLMAAAAGALTTGLFFHP), 223-243 (ILSGAIVAAIAIAAGMVAVWC), 258-278 (VFVLGIGGFILGILGVIGGPV), 300-320 (DYFLLAVIKLAALVVAAASGF), 322-342 (GGRIFPAVFVGVALGLMLHEH), 343-363 (VPAVPAAITVSCAILGIVLVV), and 371-391 (LFMAAVVVPNTTLLPLLCIVM).

This sequence belongs to the chloride channel (TC 2.A.49) family.

The protein resides in the cell membrane. In Escherichia coli O127:H6 (strain E2348/69 / EPEC), this protein is Putative ion-transport protein YfeO.